The primary structure comprises 275 residues: Biotin synthase (275 aa).

One can recognise a Radical SAM core domain in the interval 1-217 (MLCAICNVSS…DTAKTLPQCR (217 aa)). 3 residues coordinate [4Fe-4S] cluster: C13, C17, and C20. Residues C57, C92, C150, and R217 each contribute to the [2Fe-2S] cluster site.

Belongs to the radical SAM superfamily. Biotin synthase family. As to quaternary structure, homodimer. Requires [4Fe-4S] cluster as cofactor. The cofactor is [2Fe-2S] cluster.

The enzyme catalyses (4R,5S)-dethiobiotin + (sulfur carrier)-SH + 2 reduced [2Fe-2S]-[ferredoxin] + 2 S-adenosyl-L-methionine = (sulfur carrier)-H + biotin + 2 5'-deoxyadenosine + 2 L-methionine + 2 oxidized [2Fe-2S]-[ferredoxin]. It participates in cofactor biosynthesis; biotin biosynthesis; biotin from 7,8-diaminononanoate: step 2/2. Functionally, catalyzes the conversion of dethiobiotin (DTB) to biotin by the insertion of a sulfur atom into dethiobiotin via a radical-based mechanism. The protein is Biotin synthase of Campylobacter fetus subsp. fetus (strain 82-40).